The primary structure comprises 183 residues: UPF0397 protein stu0306/stu0307 (183 aa).

A run of 5 helical transmembrane segments spans residues 11–31 (ATGIGAALFIIICIFVNIPIF), 44–64 (VLFSVIFGSRSIIGFFMGFIG), 74–94 (GDISWAWVLASGITGLVIGLF), 111–131 (IWFNLAQALGLLIAYGVVTPI), and 149–169 (FVAGVANFITIAIGGTLLLAI).

The protein belongs to the UPF0397 family.

The protein localises to the cell membrane. The polypeptide is UPF0397 protein stu0306/stu0307 (Streptococcus thermophilus (strain ATCC BAA-250 / LMG 18311)).